A 241-amino-acid polypeptide reads, in one-letter code: Phosphoribosylaminoimidazole-succinocarboxamide synthase (241 aa).

This sequence belongs to the SAICAR synthetase family.

It carries out the reaction 5-amino-1-(5-phospho-D-ribosyl)imidazole-4-carboxylate + L-aspartate + ATP = (2S)-2-[5-amino-1-(5-phospho-beta-D-ribosyl)imidazole-4-carboxamido]succinate + ADP + phosphate + 2 H(+). It participates in purine metabolism; IMP biosynthesis via de novo pathway; 5-amino-1-(5-phospho-D-ribosyl)imidazole-4-carboxamide from 5-amino-1-(5-phospho-D-ribosyl)imidazole-4-carboxylate: step 1/2. This chain is Phosphoribosylaminoimidazole-succinocarboxamide synthase (purC), found in Bacillus subtilis (strain 168).